The chain runs to 878 residues: Alanine--tRNA ligase (878 aa).

His-567, His-571, Cys-669, and His-673 together coordinate Zn(2+).

It belongs to the class-II aminoacyl-tRNA synthetase family. Zn(2+) serves as cofactor.

Its subcellular location is the cytoplasm. The catalysed reaction is tRNA(Ala) + L-alanine + ATP = L-alanyl-tRNA(Ala) + AMP + diphosphate. Its function is as follows. Catalyzes the attachment of alanine to tRNA(Ala) in a two-step reaction: alanine is first activated by ATP to form Ala-AMP and then transferred to the acceptor end of tRNA(Ala). Also edits incorrectly charged Ser-tRNA(Ala) and Gly-tRNA(Ala) via its editing domain. The protein is Alanine--tRNA ligase of Rickettsia conorii (strain ATCC VR-613 / Malish 7).